The following is a 278-amino-acid chain: HTH-type transcriptional regulator ExsA (278 aa).

The HTH araC/xylS-type domain occupies 171 to 269; sequence ERLQLFMEKH…GCTPSRSRQG (99 aa). 2 DNA-binding regions (H-T-H motif) span residues 188–209 and 236–259; these read SDFS…GSVY and IVDI…RRRF.

As to quaternary structure, homodimer. Interacts with ExsD; this interaction inhibits ExsA activity.

With respect to regulation, in the absence of inducing signals such as low Ca(2+) or host cell contact, the T3SS/injectisome is expressed at a low basal level and exists in a quiescent state due to ExsA sequestration by ExsD in a 1:1 complex. Upon host cell contact, this interaction is disrupted by the anti-antiactivator protein ExsC leading to ExsA activation. Transcriptional regulator that plays an essential role in the activation the type III secretion system (T3SS) operons. In addition, ExsA directly regulates the transcription of ImpA virulence factor that cooperatively inhibits the functions of host macrophages together with the T3SS. This chain is HTH-type transcriptional regulator ExsA (exsA), found in Pseudomonas aeruginosa (strain ATCC 15692 / DSM 22644 / CIP 104116 / JCM 14847 / LMG 12228 / 1C / PRS 101 / PAO1).